A 442-amino-acid polypeptide reads, in one-letter code: Cell cycle checkpoint control protein RAD9B (442 aa).

Disordered stretches follow at residues 370–392 (EVPE…TEDV) and 422–442 (QSLA…FSTF). S387 carries the phosphoserine modification.

This sequence belongs to the rad9 family. As to quaternary structure, interacts with HUS1, HUS1B, RAD1, RAD9A and RAD17.

This is Cell cycle checkpoint control protein RAD9B (RAD9B) from Bos taurus (Bovine).